A 1003-amino-acid polypeptide reads, in one-letter code: MIFPVTLLAFQWHRRPGGRALSRAAMEVAFRGVRKVLCVAEKNDAAKGIADLLSNGRMRRKEGLSKFNKIYEFDYHLYGQNVTMIMTSVSGHLLAHDFQMQFRKWQSCNPLVLFEAEIEKYCPENFIDIKKTLERETHHCQALVIWTDCDREGENIGFEIIHVCKAVKPNLRVLRARFSEITPHAVRTACENLTEPDQRVSDAVDVRQELDLRIGAAFTRFQTLRLQRIFPEVLAEQLISYGSCQFPTLGFVVERFKAIQAFVPEVFHKIKVTHDHKDGTVEFNWKRYRLFNHTACLVLYQLCMEDPMATVVEVRSKPKSKWRPQALDTVELEKLASRKLRINAKETMRIAEKLYTQGYISYPRTETNIFPKDLNLVALVEQQTVDPHWGAFAQTILERGGPTPRNGSKSDQAHPPIHPTKYTSGLQGDDRRLYEFIVRHFLACCSQDAQGQETTVEIDIAQERFVAHGLIILARNYLDVYPYDHWSDKLLPVYEQGSHFQPSTVEMVDGETSPPQLLTEADLIALMEKHGIGTDATHAEHIETIKARMYVGLTSDKRFLPGHLGMGLVEGYDSMGYEMSKPDLRAELEADLKLICEGKKDKFQVLRQQVQKYKQVFIEAVAKAKKLDEALSQYLGERTEMAQQEEIYPAMPEPVRKCPQCNKDMVLKTKKSGGFYLSCMGFPECRSAVWFPDSVLEASRDNSVCSVCQPPPVYRLKLKFKRGSLPPAMPLEFVGCIGGCDETLKEIFGLRFPRALPRASQPSGHLQASQALNRMDSSQHNLSQPLVNRHTRPSKTVAQALLPPTTAGESNSVTCNCGREAVLLTVRKQGPNQGRHFYKCSNGDCNFFLWADSSHSTGGGTPTSASGPPGSSVGCPSSVGSHMDGFGSLGSDSDGGTPCLCGQPAVTRTVQKDGPNKGRQFHTCAKPREQQCGFFQWVDENVAPGSFAAPAWPGGRGKAQRPEAASKRPRAGSSDAGSTVKKPRKCSLCHQPGHTRTFCPQNR.

The region spanning 35–179 (KVLCVAEKND…NLRVLRARFS (145 aa)) is the Toprim domain. The Topo IA-type catalytic domain occupies 197–617 (DQRVSDAVDV…QQVQKYKQVF (421 aa)). Y362 acts as the O-(5'-phospho-DNA)-tyrosine intermediate in catalysis. The segment at 400-426 (GGPTPRNGSKSDQAHPPIHPTKYTSGL) is disordered. The C4-type zinc-finger motif lies at 658–685 (CPQCNKDMVLKTKKSGGFYLSCMGFPEC). Zn(2+) contacts are provided by C815, C817, C840, and C845. The GRF-type 1 zinc finger occupies 815-854 (CNCGREAVLLTVRKQGPNQGRHFYKCSNGDCNFFLWADSS). Residues 856–888 (STGGGTPTSASGPPGSSVGCPSSVGSHMDGFGS) are disordered. Over residues 862–888 (PTSASGPPGSSVGCPSSVGSHMDGFGS) the composition is skewed to low complexity. Zn(2+)-binding residues include C899, C901, C924, and C932. Residues 899 to 941 (CLCGQPAVTRTVQKDGPNKGRQFHTCAKPREQQCGFFQWVDEN) form a GRF-type 2 zinc finger. The disordered stretch occupies residues 946 to 991 (SFAAPAWPGGRGKAQRPEAASKRPRAGSSDAGSTVKKPRKCSLCHQ).

Belongs to the type IA topoisomerase family. In terms of assembly, binds ssDNA. Interacts (via N-terminal region) with BLM; the interaction is direct. Directly interacts with RMI1. Component of the RMI complex, containing at least TOP3A, RMI1 and RMI2. The RMI complex interacts with BLM. It depends on Mg(2+) as a cofactor. Highly expressed in testis.

The protein localises to the mitochondrion matrix. The enzyme catalyses ATP-independent breakage of single-stranded DNA, followed by passage and rejoining.. Functionally, releases the supercoiling and torsional tension of DNA introduced during the DNA replication and transcription by transiently cleaving and rejoining one strand of the DNA duplex. Introduces a single-strand break via transesterification at a target site in duplex DNA. The scissile phosphodiester is attacked by the catalytic tyrosine of the enzyme, resulting in the formation of a DNA-(5'-phosphotyrosyl)-enzyme intermediate and the expulsion of a 3'-OH DNA strand. The free DNA strand then undergoes passage around the unbroken strand thus removing DNA supercoils. Finally, in the religation step, the DNA 3'-OH attacks the covalent intermediate to expel the active-site tyrosine and restore the DNA phosphodiester backbone. As an essential component of the RMI complex it is involved in chromosome separation and the processing of homologous recombination intermediates to limit DNA crossover formation in cells. Has DNA decatenation activity. It is required for mtDNA decatenation and segregation after completion of replication, in a process that does not require BLM, RMI1 and RMI2. This Mus musculus (Mouse) protein is DNA topoisomerase 3-alpha (Top3a).